The chain runs to 621 residues: Cystathionine gamma-synthase (621 aa).

K429 is subject to N6-(pyridoxal phosphate)lysine.

This sequence belongs to the trans-sulfuration enzymes family. MET7 subfamily. As to quaternary structure, both met-3 and met-7 are required to form a functional cystathionine gamma-synthase. Requires pyridoxal 5'-phosphate as cofactor.

It carries out the reaction O-succinyl-L-homoserine + L-cysteine = L,L-cystathionine + succinate + H(+). It participates in amino-acid biosynthesis; L-methionine biosynthesis via de novo pathway; L-cystathionine from O-succinyl-L-homoserine: step 1/1. In terms of biological role, catalyzes the formation of L-cystathionine from O-succinyl-L-homoserine (OSHS) and L-cysteine, via a gamma-replacement reaction. In the absence of thiol, catalyzes gamma-elimination to form 2-oxobutanoate, succinate and ammonia. This is Cystathionine gamma-synthase (met-7) from Neurospora crassa (strain ATCC 24698 / 74-OR23-1A / CBS 708.71 / DSM 1257 / FGSC 987).